The primary structure comprises 111 residues: Large ribosomal subunit protein uL24 (111 aa).

Belongs to the universal ribosomal protein uL24 family. As to quaternary structure, part of the 50S ribosomal subunit.

One of two assembly initiator proteins, it binds directly to the 5'-end of the 23S rRNA, where it nucleates assembly of the 50S subunit. Its function is as follows. One of the proteins that surrounds the polypeptide exit tunnel on the outside of the subunit. This chain is Large ribosomal subunit protein uL24, found in Myxococcus xanthus (strain DK1622).